Consider the following 359-residue polypeptide: MGCVHSTGSEAKKRSQLIDAQLRLEHDQCGTEVKLLLLGAGESGKSTIVRQMRILHVIGFSKQEKLAYRAVIYSNMIQSMLVIIRVMKALGIDFENSAHKEDAHQFSSHYLHIHNADLSEAFSLELSDLMKNLWSDAGVRRCFKRSREFQLNDSTEYYFNSLDRISETTYLPTQDDILRARVKSTGIVETDFMYKDIYFRMFDVGGQRSERKKWIHCFEGVTAVIFCVALSEYDMKLAEDKIMNRMHESMQLFDSIVNNRWFTETSMILFLNKMDIFEEKIRHIPLNICFPEYKGGTSVTETSNYIRSVFEKLNKRKSTAQKEVYSHFTCATDTNNIRFVFDAVTDIIIRYNLKDCGLF.

G2 carries N-myristoyl glycine lipidation. Residue C3 is the site of S-palmitoyl cysteine attachment. The G-alpha domain maps to T31–F359. Positions K34–T47 are G1 motif. GTP-binding positions include G39 to S46, L178 to S184, D203 to Q207, N272 to D275, and A331. A Mg(2+)-binding site is contributed by S46. Positions D176–S184 are G2 motif. A G3 motif region spans residues F199–R208. The segment at I268–D275 is G4 motif. The G5 motif stretch occupies residues T329 to T334.

It belongs to the G-alpha family. G(i/o/t/z) subfamily. In terms of assembly, g proteins are composed of 3 units; alpha, beta and gamma. The alpha chain contains the guanine nucleotide binding site.

Its function is as follows. Guanine nucleotide-binding proteins (G proteins) are involved as modulators or transducers in various transmembrane signaling systems. This chain is Guanine nucleotide-binding protein alpha-4 subunit (gpa-4), found in Caenorhabditis briggsae.